We begin with the raw amino-acid sequence, 557 residues long: Nicotinate phosphoribosyltransferase 2 (557 aa).

Residues Y31 and T219 each contribute to the nicotinate site. Residue H222 is modified to Phosphohistidine. R329 contributes to the nicotinate binding site. T391 serves as a coordination point for 5-phospho-alpha-D-ribose 1-diphosphate.

Belongs to the NAPRTase family. Mg(2+) serves as cofactor. Mn(2+) is required as a cofactor. Transiently phosphorylated on a His residue during the reaction cycle. Phosphorylation strongly increases the affinity for substrates and increases the rate of nicotinate D-ribonucleotide production. Dephosphorylation regenerates the low-affinity form of the enzyme, leading to product release.

The enzyme catalyses nicotinate + 5-phospho-alpha-D-ribose 1-diphosphate + ATP + H2O = nicotinate beta-D-ribonucleotide + ADP + phosphate + diphosphate. The protein operates within cofactor biosynthesis; NAD(+) biosynthesis; nicotinate D-ribonucleotide from nicotinate: step 1/1. Catalyzes the first step in the biosynthesis of NAD from nicotinic acid, the ATP-dependent synthesis of beta-nicotinate D-ribonucleotide from nicotinate and 5-phospho-D-ribose 1-phosphate. Helps prevent cellular oxidative stress via its role in NAD biosynthesis. The chain is Nicotinate phosphoribosyltransferase 2 from Arabidopsis thaliana (Mouse-ear cress).